An 84-amino-acid polypeptide reads, in one-letter code: MSSLIEYPLVTEKAMDEMDFDNKLQFIVDTDATKDEIENEIESRYEITIIDTKTQITPRAKKKATVRLSDDDDAQDIASRIGVF.

The protein belongs to the universal ribosomal protein uL23 family. Part of the 50S ribosomal subunit. Contacts protein L29.

Functionally, binds to 23S rRNA. One of the proteins that surrounds the polypeptide exit tunnel on the outside of the ribosome. The protein is Large ribosomal subunit protein uL23 of Haloquadratum walsbyi (strain DSM 16790 / HBSQ001).